Consider the following 485-residue polypeptide: Probable high-affinity nitrate transporter 2.4 (485 aa).

12 helical membrane passes run Trp-56–Met-76, Leu-80–Val-100, Gly-119–Pro-139, Phe-147–Phe-167, Ala-177–Ala-197, Val-215–Pro-235, Ala-270–Val-290, Ala-305–Ala-327, Leu-341–Met-361, Val-377–Val-397, Val-405–Phe-425, and Ala-435–Phe-455.

Belongs to the major facilitator superfamily. Nitrate/nitrite porter (TC 2.A.1.8) family. As to expression, expressed in the base of the lateral root primordia, root-shoot junction zone, leaves, ends of the husk and vascular tissue of the anthers.

The protein resides in the cell membrane. In terms of biological role, involved in nitrate transport. The chain is Probable high-affinity nitrate transporter 2.4 (NRT2.4) from Oryza sativa subsp. japonica (Rice).